Here is a 424-residue protein sequence, read N- to C-terminus: Anaerobic glycerol-3-phosphate dehydrogenase subunit B (424 aa).

Belongs to the anaerobic G-3-P dehydrogenase subunit B family. Composed of a catalytic GlpA/B dimer and of membrane bound GlpC. The cofactor is FMN.

It carries out the reaction a quinone + sn-glycerol 3-phosphate = dihydroxyacetone phosphate + a quinol. The protein operates within polyol metabolism; glycerol degradation via glycerol kinase pathway; glycerone phosphate from sn-glycerol 3-phosphate (anaerobic route): step 1/1. In terms of biological role, conversion of glycerol 3-phosphate to dihydroxyacetone. Uses fumarate or nitrate as electron acceptor. The protein is Anaerobic glycerol-3-phosphate dehydrogenase subunit B of Yersinia pestis bv. Antiqua (strain Antiqua).